Consider the following 1484-residue polypeptide: DNA-directed RNA polymerase subunit beta' (1484 aa).

Positions 67, 69, 82, and 85 each coordinate Zn(2+). Mg(2+)-binding residues include Asp499, Asp501, and Asp503. Residues Cys867, Cys943, Cys950, and Cys953 each contribute to the Zn(2+) site.

Belongs to the RNA polymerase beta' chain family. As to quaternary structure, the RNAP catalytic core consists of 2 alpha, 1 beta, 1 beta' and 1 omega subunit. When a sigma factor is associated with the core the holoenzyme is formed, which can initiate transcription. The cofactor is Mg(2+). Requires Zn(2+) as cofactor.

It carries out the reaction RNA(n) + a ribonucleoside 5'-triphosphate = RNA(n+1) + diphosphate. Functionally, DNA-dependent RNA polymerase catalyzes the transcription of DNA into RNA using the four ribonucleoside triphosphates as substrates. The polypeptide is DNA-directed RNA polymerase subunit beta' (Chlorobium phaeovibrioides (strain DSM 265 / 1930) (Prosthecochloris vibrioformis (strain DSM 265))).